We begin with the raw amino-acid sequence, 311 residues long: Putative dihydroorotate dehydrogenase A (fumarate) (311 aa).

Substrate is bound by residues K45, 69–73 (NSMGL), and N128. Residue 45–46 (KT) coordinates FMN. An FMN-binding site is contributed by N128. The active-site Nucleophile is the C131. FMN contacts are provided by K165 and V193. 194–195 (NS) is a binding site for substrate. FMN-binding positions include G220, 248-249 (GG), and 270-271 (GT).

This sequence belongs to the dihydroorotate dehydrogenase family. Type 1 subfamily. As to quaternary structure, homodimer. Requires FMN as cofactor.

It localises to the cytoplasm. The enzyme catalyses (S)-dihydroorotate + fumarate = orotate + succinate. It functions in the pathway pyrimidine metabolism; UMP biosynthesis via de novo pathway. Catalyzes the conversion of dihydroorotate to orotate with fumarate as the electron acceptor. This is Putative dihydroorotate dehydrogenase A (fumarate) (pyrD) from Streptococcus pyogenes serotype M5 (strain Manfredo).